The primary structure comprises 282 residues: Undecaprenyl-diphosphatase (282 aa).

7 consecutive transmembrane segments (helical) span residues 40 to 60 (GAAF…IYFM), 89 to 109 (WMIA…KDDI), 113 to 133 (LRSL…LSIA), 150 to 170 (ISEI…MALI), 196 to 216 (FSFL…LYKT), 230 to 250 (IAVA…FLLT), and 258 to 278 (GIFI…IGTG).

Belongs to the UppP family.

The protein resides in the cell inner membrane. It catalyses the reaction di-trans,octa-cis-undecaprenyl diphosphate + H2O = di-trans,octa-cis-undecaprenyl phosphate + phosphate + H(+). In terms of biological role, catalyzes the dephosphorylation of undecaprenyl diphosphate (UPP). Confers resistance to bacitracin. The protein is Undecaprenyl-diphosphatase of Chlorobaculum parvum (strain DSM 263 / NCIMB 8327) (Chlorobium vibrioforme subsp. thiosulfatophilum).